Consider the following 119-residue polypeptide: Large ribosomal subunit protein bL20 (119 aa).

Belongs to the bacterial ribosomal protein bL20 family.

In terms of biological role, binds directly to 23S ribosomal RNA and is necessary for the in vitro assembly process of the 50S ribosomal subunit. It is not involved in the protein synthesizing functions of that subunit. In Syntrophus aciditrophicus (strain SB), this protein is Large ribosomal subunit protein bL20.